A 460-amino-acid polypeptide reads, in one-letter code: Putative RNA-guided DNA endonuclease MT2953 (460 aa).

Catalysis depends on residues aspartate 224 and glutamate 313. Positions 372, 375, 389, and 392 each coordinate Zn(2+). Aspartate 399 is a catalytic residue. The tract at residues 415 to 460 is disordered; it reads VVGPVGAAVKRGADRKTGPGPAGGREARKATGHPAGEQPRDGVQVK.

In the N-terminal section; belongs to the transposase 2 family. It in the C-terminal section; belongs to the transposase 35 family.

An RNA-guided dsDNA endonuclease. When guided by an RNA derived from the right-end element of its insertion sequence element (IS), cleaves DNA downstream of the transposon-associated motif (TAM). Cleaves supercoiled and linear DNA in a staggered manner 15-21 bases from the TAM yielding 5'-overhangs. Binds reRNA, an approximately 150 nucleotide base sRNA derived from the 3' end of its own gene, the right end (RE) of the insertion sequence (IS) plus sequence downstream of the IS. This Mycobacterium tuberculosis (strain CDC 1551 / Oshkosh) protein is Putative RNA-guided DNA endonuclease MT2953.